A 340-amino-acid polypeptide reads, in one-letter code: tRNA N6-adenosine threonylcarbamoyltransferase (340 aa).

Fe cation contacts are provided by H114 and H118. Substrate-binding positions include 140 to 144 (TISGG), D173, G186, D190, and N281. D309 provides a ligand contact to Fe cation.

The protein belongs to the KAE1 / TsaD family. Fe(2+) serves as cofactor.

It is found in the cytoplasm. It catalyses the reaction L-threonylcarbamoyladenylate + adenosine(37) in tRNA = N(6)-L-threonylcarbamoyladenosine(37) in tRNA + AMP + H(+). In terms of biological role, required for the formation of a threonylcarbamoyl group on adenosine at position 37 (t(6)A37) in tRNAs that read codons beginning with adenine. Is involved in the transfer of the threonylcarbamoyl moiety of threonylcarbamoyl-AMP (TC-AMP) to the N6 group of A37, together with TsaE and TsaB. TsaD likely plays a direct catalytic role in this reaction. The sequence is that of tRNA N6-adenosine threonylcarbamoyltransferase from Christiangramia forsetii (strain DSM 17595 / CGMCC 1.15422 / KT0803) (Gramella forsetii).